Here is a 557-residue protein sequence, read N- to C-terminus: Ubiquitin C-terminal hydrolase 22 (557 aa).

Residues 36-130 (FRCFNDARIK…VSKQLFGLGM (95 aa)) form a UBP-type; degenerate zinc finger. Zn(2+) contacts are provided by cysteine 56, cysteine 59, cysteine 69, cysteine 72, cysteine 77, histidine 80, histidine 84, and histidine 91. In terms of domain architecture, USP spans 177–531 (RGLNNLGSTC…ECYMLFYAQE (355 aa)). Cysteine 186 acts as the Nucleophile in catalysis. Histidine 491 (proton acceptor) is an active-site residue.

Belongs to the peptidase C19 family. Component of a deubiquitination module (DUB module) formed by ENY2, SGF11, and UBP22 in Arabidopsis. Interacts directly with SGF11, but not with ENY2.

Its subcellular location is the nucleus. It localises to the nucleoplasm. It catalyses the reaction Thiol-dependent hydrolysis of ester, thioester, amide, peptide and isopeptide bonds formed by the C-terminal Gly of ubiquitin (a 76-residue protein attached to proteins as an intracellular targeting signal).. Component of a deubiquitination module (DUB module) that specifically deubiquinates monoubiquinated histone H2B (H2Bub). Does not seem to be a component of the TREX-2 complex. Seems to act independently of the SAGA multiprotein complex. The DUB module is responsible for the major H2Bub deubiquitinase activity in Arabidopsis. The protein is Ubiquitin C-terminal hydrolase 22 of Arabidopsis thaliana (Mouse-ear cress).